The sequence spans 403 residues: 26S proteasome regulatory subunit 8 homolog (403 aa).

Position 186–193 (186–193 (GPPGTGKT)) interacts with ATP.

It belongs to the AAA ATPase family.

It localises to the cytoplasm. It is found in the nucleus. Functionally, the 26S proteasome is involved in the ATP-dependent degradation of ubiquitinated proteins. The regulatory (or ATPase) complex confers ATP dependency and substrate specificity to the 26S complex. The protein is 26S proteasome regulatory subunit 8 homolog (let1) of Schizosaccharomyces pombe (strain 972 / ATCC 24843) (Fission yeast).